We begin with the raw amino-acid sequence, 197 residues long: Peptidyl-tRNA hydrolase (197 aa).

Tyr21 provides a ligand contact to tRNA. The Proton acceptor role is filled by His26. Residues Tyr72, Asn74, and Asn120 each contribute to the tRNA site.

Belongs to the PTH family. Monomer.

The protein resides in the cytoplasm. The catalysed reaction is an N-acyl-L-alpha-aminoacyl-tRNA + H2O = an N-acyl-L-amino acid + a tRNA + H(+). Its function is as follows. Hydrolyzes ribosome-free peptidyl-tRNAs (with 1 or more amino acids incorporated), which drop off the ribosome during protein synthesis, or as a result of ribosome stalling. Catalyzes the release of premature peptidyl moieties from peptidyl-tRNA molecules trapped in stalled 50S ribosomal subunits, and thus maintains levels of free tRNAs and 50S ribosomes. In Saccharophagus degradans (strain 2-40 / ATCC 43961 / DSM 17024), this protein is Peptidyl-tRNA hydrolase.